We begin with the raw amino-acid sequence, 282 residues long: Adenosylcobinamide-GDP ribazoletransferase (282 aa).

The next 6 membrane-spanning stretches (helical) occupy residues 47–67, 72–92, 124–144, 167–187, 208–228, and 231–251; these read GVGI…QALL, FTPL…TGGF, AFGA…LAML, AALL…IWLL, GSLL…GLAL, and ISLI…GALF.

Belongs to the CobS family. The cofactor is Mg(2+).

It is found in the cell inner membrane. It catalyses the reaction alpha-ribazole + adenosylcob(III)inamide-GDP = adenosylcob(III)alamin + GMP + H(+). The enzyme catalyses alpha-ribazole 5'-phosphate + adenosylcob(III)inamide-GDP = adenosylcob(III)alamin 5'-phosphate + GMP + H(+). The protein operates within cofactor biosynthesis; adenosylcobalamin biosynthesis; adenosylcobalamin from cob(II)yrinate a,c-diamide: step 7/7. Functionally, joins adenosylcobinamide-GDP and alpha-ribazole to generate adenosylcobalamin (Ado-cobalamin). Also synthesizes adenosylcobalamin 5'-phosphate from adenosylcobinamide-GDP and alpha-ribazole 5'-phosphate. In Polaromonas sp. (strain JS666 / ATCC BAA-500), this protein is Adenosylcobinamide-GDP ribazoletransferase.